A 376-amino-acid polypeptide reads, in one-letter code: Queuine tRNA-ribosyltransferase (376 aa).

Asp-90 (proton acceptor) is an active-site residue. Residues 90 to 94 (DSGGF), Asp-144, Gln-193, and Gly-220 contribute to the substrate site. Residues 251 to 257 (GVGTPED) form an RNA binding region. The active-site Nucleophile is the Asp-270. The segment at 275-279 (TRNAR) is RNA binding; important for wobble base 34 recognition. 4 residues coordinate Zn(2+): Cys-308, Cys-310, Cys-313, and His-339.

Belongs to the queuine tRNA-ribosyltransferase family. In terms of assembly, homodimer. Within each dimer, one monomer is responsible for RNA recognition and catalysis, while the other monomer binds to the replacement base PreQ1. Zn(2+) serves as cofactor.

The enzyme catalyses 7-aminomethyl-7-carbaguanine + guanosine(34) in tRNA = 7-aminomethyl-7-carbaguanosine(34) in tRNA + guanine. The protein operates within tRNA modification; tRNA-queuosine biosynthesis. Catalyzes the base-exchange of a guanine (G) residue with the queuine precursor 7-aminomethyl-7-deazaguanine (PreQ1) at position 34 (anticodon wobble position) in tRNAs with GU(N) anticodons (tRNA-Asp, -Asn, -His and -Tyr). Catalysis occurs through a double-displacement mechanism. The nucleophile active site attacks the C1' of nucleotide 34 to detach the guanine base from the RNA, forming a covalent enzyme-RNA intermediate. The proton acceptor active site deprotonates the incoming PreQ1, allowing a nucleophilic attack on the C1' of the ribose to form the product. After dissociation, two additional enzymatic reactions on the tRNA convert PreQ1 to queuine (Q), resulting in the hypermodified nucleoside queuosine (7-(((4,5-cis-dihydroxy-2-cyclopenten-1-yl)amino)methyl)-7-deazaguanosine). This is Queuine tRNA-ribosyltransferase from Cupriavidus taiwanensis (strain DSM 17343 / BCRC 17206 / CCUG 44338 / CIP 107171 / LMG 19424 / R1) (Ralstonia taiwanensis (strain LMG 19424)).